A 929-amino-acid polypeptide reads, in one-letter code: Isoleucine--tRNA ligase (929 aa).

The 'HIGH' region motif lies at 58–68 (PYANGDIHIGH). Glutamate 563 provides a ligand contact to L-isoleucyl-5'-AMP. The 'KMSKS' region signature appears at 605 to 609 (KMSKS). Lysine 608 is a binding site for ATP. Cysteine 892, cysteine 895, cysteine 912, and cysteine 915 together coordinate Zn(2+).

Belongs to the class-I aminoacyl-tRNA synthetase family. IleS type 1 subfamily. As to quaternary structure, monomer. Zn(2+) serves as cofactor.

It is found in the cytoplasm. The enzyme catalyses tRNA(Ile) + L-isoleucine + ATP = L-isoleucyl-tRNA(Ile) + AMP + diphosphate. Catalyzes the attachment of isoleucine to tRNA(Ile). As IleRS can inadvertently accommodate and process structurally similar amino acids such as valine, to avoid such errors it has two additional distinct tRNA(Ile)-dependent editing activities. One activity is designated as 'pretransfer' editing and involves the hydrolysis of activated Val-AMP. The other activity is designated 'posttransfer' editing and involves deacylation of mischarged Val-tRNA(Ile). The polypeptide is Isoleucine--tRNA ligase (Neisseria meningitidis serogroup C / serotype 2a (strain ATCC 700532 / DSM 15464 / FAM18)).